Here is a 110-residue protein sequence, read N- to C-terminus: MADKPKRPLSAYMLWLNSARESIKRENPDFKVTEVAKKGGELWRGLKDKSEWEAKAATAKQNYIRALQEYERNGGGGDDKGKKRKGAAPKKGAGKKSKKGAHSDDDGDSE.

The segment at residues 5-71 (PKRPLSAYML…NYIRALQEYE (67 aa)) is a DNA-binding region (HMG box). Over residues 71 to 81 (ERNGGGGDDKG) the composition is skewed to basic and acidic residues. The segment at 71–110 (ERNGGGGDDKGKKRKGAAPKKGAGKKSKKGAHSDDDGDSE) is disordered. Residues 82-100 (KKRKGAAPKKGAGKKSKKG) are compositionally biased toward basic residues.

It belongs to the HMGB family.

The protein localises to the nucleus. It is found in the chromosome. Its function is as follows. Found in condensed chromomeres. Binds preferentially to AT-rich DNA. In Chironomus tentans (Midge), this protein is Mobility group protein 1B (HMG1B).